Consider the following 490-residue polypeptide: ATP synthase subunit beta (490 aa).

An ATP-binding site is contributed by Gly175–Thr182.

The protein belongs to the ATPase alpha/beta chains family. In terms of assembly, F-type ATPases have 2 components, CF(1) - the catalytic core - and CF(0) - the membrane proton channel. CF(1) has five subunits: alpha(3), beta(3), gamma(1), delta(1), epsilon(1). CF(0) has three main subunits: a(1), b(2) and c(9-12). The alpha and beta chains form an alternating ring which encloses part of the gamma chain. CF(1) is attached to CF(0) by a central stalk formed by the gamma and epsilon chains, while a peripheral stalk is formed by the delta and b chains.

Its subcellular location is the cell membrane. It catalyses the reaction ATP + H2O + 4 H(+)(in) = ADP + phosphate + 5 H(+)(out). Its function is as follows. Produces ATP from ADP in the presence of a proton gradient across the membrane. The catalytic sites are hosted primarily by the beta subunits. This is ATP synthase subunit beta from Acidothermus cellulolyticus (strain ATCC 43068 / DSM 8971 / 11B).